Consider the following 379-residue polypeptide: Alanine racemase (379 aa).

Catalysis depends on Lys-37, which acts as the Proton acceptor; specific for D-alanine. Lys-37 is subject to N6-(pyridoxal phosphate)lysine. Arg-139 lines the substrate pocket. The active-site Proton acceptor; specific for L-alanine is the Tyr-266. Met-314 contacts substrate.

The protein belongs to the alanine racemase family. Pyridoxal 5'-phosphate is required as a cofactor.

The catalysed reaction is L-alanine = D-alanine. Its pathway is amino-acid biosynthesis; D-alanine biosynthesis; D-alanine from L-alanine: step 1/1. Catalyzes the interconversion of L-alanine and D-alanine. May also act on other amino acids. The chain is Alanine racemase (alr) from Sorangium cellulosum (strain So ce56) (Polyangium cellulosum (strain So ce56)).